A 515-amino-acid chain; its full sequence is Anthranilate synthase component 1 (515 aa).

L-tryptophan is bound by residues Thr-40 and 291–293 (PYM). A chorismate-binding site is contributed by 328–329 (GT). Glu-361 lines the Mg(2+) pocket. Chorismate contacts are provided by residues Tyr-449, Arg-469, 483-485 (GAG), and Gly-485. Glu-498 contacts Mg(2+).

The protein belongs to the anthranilate synthase component I family. As to quaternary structure, heterotetramer consisting of two non-identical subunits: a beta subunit (TrpG) and a large alpha subunit (TrpE). Mg(2+) serves as cofactor.

The catalysed reaction is chorismate + L-glutamine = anthranilate + pyruvate + L-glutamate + H(+). It participates in amino-acid biosynthesis; L-tryptophan biosynthesis; L-tryptophan from chorismate: step 1/5. With respect to regulation, feedback inhibited by tryptophan. Part of a heterotetrameric complex that catalyzes the two-step biosynthesis of anthranilate, an intermediate in the biosynthesis of L-tryptophan. In the first step, the glutamine-binding beta subunit (TrpG) of anthranilate synthase (AS) provides the glutamine amidotransferase activity which generates ammonia as a substrate that, along with chorismate, is used in the second step, catalyzed by the large alpha subunit of AS (TrpE) to produce anthranilate. In the absence of TrpG, TrpE can synthesize anthranilate directly from chorismate and high concentrations of ammonia. The polypeptide is Anthranilate synthase component 1 (trpE) (Buchnera aphidicola subsp. Schizaphis graminum (strain Sg)).